A 179-amino-acid chain; its full sequence is ADP-ribosylation factor 1-like 1 (179 aa).

A lipid anchor (N-myristoyl glycine) is attached at G2. The interval 3-16 is important for the stable binding to the membranes; that stretch reads LFFSKISSFMFPNI. Residues 24–32, 126–129, and A160 contribute to the GTP site; these read GLDGAGKTT and NKQD.

The protein belongs to the small GTPase superfamily. Arf family.

The protein localises to the golgi apparatus membrane. It catalyses the reaction GTP + H2O = GDP + phosphate + H(+). Its activity is regulated as follows. Alternates between an inactive GDP-bound form and an active GTP-bound form. Activated by a guanine nucleotide-exchange factor (GEF) and inactivated by GTPase-activating protein (GAP). Functionally, small GTPase involved in protein trafficking between different compartments. Modulates vesicle budding and uncoating within the Golgi complex. In its GTP-bound form, triggers the recruitment of coatomer proteins to the Golgi membrane. The hydrolysis of ARF1-bound GTP, which is mediated by ARFGAPs proteins, is required for dissociation of coat proteins from Golgi membranes and vesicles. This Caenorhabditis elegans protein is ADP-ribosylation factor 1-like 1 (arf-1.1).